The primary structure comprises 396 residues: Cytochrome c biogenesis protein Ccs1 (396 aa).

3 helical membrane passes run 22 to 42 (LKFS…GTII), 79 to 99 (SNFY…CSLK), and 162 to 182 (AGPL…AIHA).

The protein belongs to the Ccs1/CcsB family. In terms of assembly, may interact with CcsA.

It is found in the plastid. The protein resides in the chloroplast thylakoid membrane. Required during biogenesis of c-type cytochromes (cytochrome c6 and cytochrome f) at the step of heme attachment. The sequence is that of Cytochrome c biogenesis protein Ccs1 from Cyanidium caldarium (Red alga).